Consider the following 279-residue polypeptide: Energy-coupling factor transporter ATP-binding protein EcfA1 (279 aa).

One can recognise an ABC transporter domain in the interval 5 to 240 (IELKKVTFNY…GDELLQLGLD (236 aa)). 40-47 (GHNGSGKS) serves as a coordination point for ATP.

The protein belongs to the ABC transporter superfamily. Energy-coupling factor EcfA family. In terms of assembly, forms a stable energy-coupling factor (ECF) transporter complex composed of 2 membrane-embedded substrate-binding proteins (S component), 2 ATP-binding proteins (A component) and 2 transmembrane proteins (T component).

Its subcellular location is the cell membrane. Functionally, ATP-binding (A) component of a common energy-coupling factor (ECF) ABC-transporter complex. Unlike classic ABC transporters this ECF transporter provides the energy necessary to transport a number of different substrates. This is Energy-coupling factor transporter ATP-binding protein EcfA1 from Streptococcus pyogenes serotype M28 (strain MGAS6180).